Reading from the N-terminus, the 127-residue chain is Mini-ribonuclease 3-like protein (127 aa).

Aspartate 19 is an active-site residue.

This sequence belongs to the MrnC RNase family.

Its function is as follows. Might be a ribonuclease involved in RNA processing. The sequence is that of Mini-ribonuclease 3-like protein (mrnCL) from Ilyobacter polytropus (strain ATCC 51220 / DSM 2926 / LMG 16218 / CuHBu1).